The sequence spans 320 residues: Cyclin-H (320 aa).

The residue at position 5 (serine 5) is a Phosphoserine; by CDK8. Residue serine 132 is modified to Phosphoserine. Phosphoserine; by CDK8 is present on serine 304.

This sequence belongs to the cyclin family. Cyclin C subfamily. In terms of assembly, associates primarily with CDK7 and MAT1 to form the CAK complex. CAK can further associate with the core-TFIIH to form the TFIIH basal transcription factor.

The protein localises to the nucleus. Regulates CDK7, the catalytic subunit of the CDK-activating kinase (CAK) enzymatic complex. CAK activates the cyclin-associated kinases CDK1, CDK2, CDK4 and CDK6 by threonine phosphorylation. CAK complexed to the core-TFIIH basal transcription factor activates RNA polymerase II by serine phosphorylation of the repetitive C-terminal domain (CTD) of its large subunit (POLR2A), allowing its escape from the promoter and elongation of the transcripts. Involved in cell cycle control and in RNA transcription by RNA polymerase II. Its expression and activity are constant throughout the cell cycle. The protein is Cyclin-H (CCNH) of Bos taurus (Bovine).